The following is a 302-amino-acid chain: Glycine--tRNA ligase alpha subunit (302 aa).

The protein belongs to the class-II aminoacyl-tRNA synthetase family. As to quaternary structure, tetramer of two alpha and two beta subunits.

It is found in the cytoplasm. It catalyses the reaction tRNA(Gly) + glycine + ATP = glycyl-tRNA(Gly) + AMP + diphosphate. The polypeptide is Glycine--tRNA ligase alpha subunit (Baumannia cicadellinicola subsp. Homalodisca coagulata).